We begin with the raw amino-acid sequence, 315 residues long: Putative 2-hydroxyacid dehydrogenase HI_1556 (315 aa).

Residues Thr73, Cys156–Leu157, Thr231–Arg233, and Asp257 each bind NAD(+). Residue Arg233 is part of the active site. Glu262 is an active-site residue. His285 serves as the catalytic Proton donor. Residue His285–Trp288 coordinates NAD(+).

This sequence belongs to the D-isomer specific 2-hydroxyacid dehydrogenase family.

In Haemophilus influenzae (strain ATCC 51907 / DSM 11121 / KW20 / Rd), this protein is Putative 2-hydroxyacid dehydrogenase HI_1556.